Reading from the N-terminus, the 433-residue chain is Serine--tRNA ligase (433 aa).

235–237 (TSE) lines the L-serine pocket. 266–268 (RSE) contacts ATP. Glu289 provides a ligand contact to L-serine. 353 to 356 (EISS) contributes to the ATP binding site. Ser388 serves as a coordination point for L-serine.

This sequence belongs to the class-II aminoacyl-tRNA synthetase family. Type-1 seryl-tRNA synthetase subfamily. Homodimer. The tRNA molecule binds across the dimer.

The protein resides in the cytoplasm. It carries out the reaction tRNA(Ser) + L-serine + ATP = L-seryl-tRNA(Ser) + AMP + diphosphate + H(+). It catalyses the reaction tRNA(Sec) + L-serine + ATP = L-seryl-tRNA(Sec) + AMP + diphosphate + H(+). It participates in aminoacyl-tRNA biosynthesis; selenocysteinyl-tRNA(Sec) biosynthesis; L-seryl-tRNA(Sec) from L-serine and tRNA(Sec): step 1/1. Functionally, catalyzes the attachment of serine to tRNA(Ser). Is also able to aminoacylate tRNA(Sec) with serine, to form the misacylated tRNA L-seryl-tRNA(Sec), which will be further converted into selenocysteinyl-tRNA(Sec). The polypeptide is Serine--tRNA ligase (Burkholderia ambifaria (strain MC40-6)).